The chain runs to 196 residues: UPF0134 protein MPN_501 (196 aa).

Belongs to the UPF0134 family.

The sequence is that of UPF0134 protein MPN_501 from Mycoplasma pneumoniae (strain ATCC 29342 / M129 / Subtype 1) (Mycoplasmoides pneumoniae).